Consider the following 106-residue polypeptide: Urease subunit beta (106 aa).

Belongs to the urease beta subunit family. As to quaternary structure, heterotrimer of UreA (gamma), UreB (beta) and UreC (alpha) subunits. Three heterotrimers associate to form the active enzyme.

The protein localises to the cytoplasm. It catalyses the reaction urea + 2 H2O + H(+) = hydrogencarbonate + 2 NH4(+). It functions in the pathway nitrogen metabolism; urea degradation; CO(2) and NH(3) from urea (urease route): step 1/1. This is Urease subunit beta from Klebsiella pneumoniae (strain 342).